The primary structure comprises 209 residues: Large ribosomal subunit protein uL4 (209 aa).

The tract at residues 44–77 is disordered; the sequence is QRQGTHKSKERSEVSGSTRKLIRQKGGGGARRGD.

It belongs to the universal ribosomal protein uL4 family. As to quaternary structure, part of the 50S ribosomal subunit.

Functionally, one of the primary rRNA binding proteins, this protein initially binds near the 5'-end of the 23S rRNA. It is important during the early stages of 50S assembly. It makes multiple contacts with different domains of the 23S rRNA in the assembled 50S subunit and ribosome. Forms part of the polypeptide exit tunnel. The polypeptide is Large ribosomal subunit protein uL4 (Parabacteroides distasonis (strain ATCC 8503 / DSM 20701 / CIP 104284 / JCM 5825 / NCTC 11152)).